Reading from the N-terminus, the 1057-residue chain is Self-sufficient cytochrome P450 monooxygenase CYP505E3 (1057 aa).

Position 403 (C403) interacts with heme. The interval 465-488 is disordered; that stretch reads PSAAPFSSHARETTNASLPASPGT. In terms of domain architecture, Flavodoxin-like spans 494-634; the sequence is MYVLYGSNTG…AFEAWETKLW (141 aa). FMN is bound by residues 500 to 504 and 578 to 610; these read SNTGT and VFGC…QRLV. In terms of domain architecture, FAD-binding FR-type spans 671–900; the sequence is HDAALGTVIE…RASNAAFHLP (230 aa).

The protein in the N-terminal section; belongs to the cytochrome P450 family. The cofactor is FAD. It depends on FMN as a cofactor. Requires heme as cofactor.

The enzyme catalyses 2 oxidized [cytochrome P450] + NADPH = 2 reduced [cytochrome P450] + NADP(+) + H(+). The catalysed reaction is an organic molecule + reduced [NADPH--hemoprotein reductase] + O2 = an alcohol + oxidized [NADPH--hemoprotein reductase] + H2O + H(+). It carries out the reaction dodecan-1-ol + reduced [NADPH--hemoprotein reductase] + O2 = 1,5-dodecanediol + oxidized [NADPH--hemoprotein reductase] + H2O + H(+). It catalyses the reaction dodecan-1-ol + reduced [NADPH--hemoprotein reductase] + O2 = 1,6-dodecanediol + oxidized [NADPH--hemoprotein reductase] + H2O + H(+). Self-sufficient cytochrome P450 monooxygenase that catalyzes the regioselective in-chain hydroxylation of fatty alcohols (C9-15) as well as fatty acids (C9-15) at the omega-1 to omega-7 or omega-1 to omega-6 positions, respectively. Is also able to convert naphthalene to 1-naphthol and 1-naphthol further to 1,3-dihydroxynaphthalene. The polypeptide is Self-sufficient cytochrome P450 monooxygenase CYP505E3 (Phanerodontia chrysosporium (White-rot fungus)).